The primary structure comprises 212 residues: Imidazole glycerol phosphate synthase subunit HisH (212 aa).

Residues 2–212 (QTAIIDYGMG…LTMLKNFLNW (211 aa)) form the Glutamine amidotransferase type-1 domain. The Nucleophile role is filled by cysteine 85. Residues histidine 194 and glutamate 196 contribute to the active site.

Heterodimer of HisH and HisF.

It localises to the cytoplasm. It catalyses the reaction 5-[(5-phospho-1-deoxy-D-ribulos-1-ylimino)methylamino]-1-(5-phospho-beta-D-ribosyl)imidazole-4-carboxamide + L-glutamine = D-erythro-1-(imidazol-4-yl)glycerol 3-phosphate + 5-amino-1-(5-phospho-beta-D-ribosyl)imidazole-4-carboxamide + L-glutamate + H(+). The catalysed reaction is L-glutamine + H2O = L-glutamate + NH4(+). It functions in the pathway amino-acid biosynthesis; L-histidine biosynthesis; L-histidine from 5-phospho-alpha-D-ribose 1-diphosphate: step 5/9. Its function is as follows. IGPS catalyzes the conversion of PRFAR and glutamine to IGP, AICAR and glutamate. The HisH subunit catalyzes the hydrolysis of glutamine to glutamate and ammonia as part of the synthesis of IGP and AICAR. The resulting ammonia molecule is channeled to the active site of HisF. This chain is Imidazole glycerol phosphate synthase subunit HisH (hisH), found in Neisseria meningitidis serogroup B (strain ATCC BAA-335 / MC58).